The sequence spans 227 residues: Eukaryotic translation initiation factor NCBP (227 aa).

The segment covering 1–22 has biased composition (basic and acidic residues); it reads MEPAAEKREAEQEELQQQHDEP. Positions 1 to 43 are disordered; the sequence is MEPAAEKREAEQEELQQQHDEPAVPSADDDEAEAEENERRNRE. Acidic residues predominate over residues 27–36; that stretch reads ADDDEAEAEE.

The protein belongs to the eukaryotic initiation factor 4E family. As to quaternary structure, EIF4F is a multi-subunit complex, the composition of which varies with external and internal environmental conditions. It is composed of at least EIF4A, EIF4E and EIF4G. EIF4E is also known to interact with other partners. In higher plants two isoforms of EIF4F have been identified, named isoform EIF4F and isoform EIF(iso)4F. Isoform EIF4F has subunits p220 and p26, whereas isoform EIF(iso)4F has subunits p82 and p28.

Functionally, recognizes and binds the 7-methylguanosine-containing mRNA cap during an early step in the initiation of protein synthesis and facilitates ribosome binding by inducing the unwinding of the mRNAs secondary structures. The polypeptide is Eukaryotic translation initiation factor NCBP (NCBP) (Oryza sativa subsp. japonica (Rice)).